Consider the following 187-residue polypeptide: Pyridoxal 5'-phosphate synthase subunit PdxT (187 aa).

47-49 contributes to the L-glutamine binding site; that stretch reads GES. Cys-76 serves as the catalytic Nucleophile. Residues Arg-102 and 128-129 contribute to the L-glutamine site; that span reads IR. Catalysis depends on charge relay system residues His-165 and Glu-167.

This sequence belongs to the glutaminase PdxT/SNO family. In the presence of PdxS, forms a dodecamer of heterodimers. Only shows activity in the heterodimer.

It carries out the reaction aldehydo-D-ribose 5-phosphate + D-glyceraldehyde 3-phosphate + L-glutamine = pyridoxal 5'-phosphate + L-glutamate + phosphate + 3 H2O + H(+). The enzyme catalyses L-glutamine + H2O = L-glutamate + NH4(+). It functions in the pathway cofactor biosynthesis; pyridoxal 5'-phosphate biosynthesis. Its function is as follows. Catalyzes the hydrolysis of glutamine to glutamate and ammonia as part of the biosynthesis of pyridoxal 5'-phosphate. The resulting ammonia molecule is channeled to the active site of PdxS. This is Pyridoxal 5'-phosphate synthase subunit PdxT from Methanococcus vannielii (strain ATCC 35089 / DSM 1224 / JCM 13029 / OCM 148 / SB).